A 795-amino-acid polypeptide reads, in one-letter code: Levansucrase (795 aa).

Positions 1-36 (METKVRKKMYKKGKFWVVATITTAMLTGIGLSSVQA) are cleaved as a signal peptide. Polar residues-rich tracts occupy residues 42–66 (TQVS…SAAE) and 112–130 (QAAT…GQTN). Disordered stretches follow at residues 42 to 83 (TQVS…NPAA) and 103 to 138 (ESKA…ATKE). The sucrose site is built by Trp245, Asp246, and Ser315. The active-site Nucleophile is Asp246. Residue Asp394 participates in Ca(2+) binding. Positions 399 and 400 each coordinate sucrose. Gln425, Asn464, and Asp496 together coordinate Ca(2+). Sucrose is bound at residue Glu497. Residue Glu499 is the Proton donor/acceptor of the active site. Arg517 is a binding site for sucrose. The helical transmembrane segment at 774 to 794 (GNSFFAALLALFSAFCVSIGF) threads the bilayer.

Belongs to the glycosyl hydrolase 68 family.

The protein localises to the cell membrane. Its subcellular location is the cell surface. The enzyme catalyses [6)-beta-D-fructofuranosyl-(2-&gt;](n) alpha-D-glucopyranoside + sucrose = [6)-beta-D-fructofuranosyl-(2-&gt;](n+1) alpha-D-glucopyranoside + D-glucose. Ca(2+) may play an important structural role and promote stability of levansucrase. In terms of biological role, catalyzes the synthesis of levan, a fructose polymer, by transferring the fructosyl moiety from sucrose to a growing acceptor molecule. Also displays sucrose hydrolase activity. This Streptococcus mutans serotype c (strain ATCC 700610 / UA159) protein is Levansucrase.